Reading from the N-terminus, the 228-residue chain is uncharacterized protein (228 aa).

This is an uncharacterized protein from Archaeoglobus fulgidus (strain ATCC 49558 / DSM 4304 / JCM 9628 / NBRC 100126 / VC-16).